Here is a 315-residue protein sequence, read N- to C-terminus: L-lactate dehydrogenase (315 aa).

Positions 14, 35, and 66 each coordinate NAD(+). Substrate contacts are provided by residues Q83, R89, and 121–124 (NPVD). NAD(+)-binding positions include 119 to 121 (VAN) and S144. 149-152 (DTAR) provides a ligand contact to substrate. The Proton acceptor role is filled by H176. The residue at position 221 (Y221) is a Phosphotyrosine. T230 provides a ligand contact to substrate.

It belongs to the LDH/MDH superfamily. LDH family. In terms of assembly, homotetramer.

The protein localises to the cytoplasm. The catalysed reaction is (S)-lactate + NAD(+) = pyruvate + NADH + H(+). Its pathway is fermentation; pyruvate fermentation to lactate; (S)-lactate from pyruvate: step 1/1. In terms of biological role, catalyzes the conversion of lactate to pyruvate. This is L-lactate dehydrogenase from Mesomycoplasma hyopneumoniae (strain 7448) (Mycoplasma hyopneumoniae).